Reading from the N-terminus, the 158-residue chain is NAD(P)H-quinone oxidoreductase subunit J, chloroplastic (158 aa).

It belongs to the complex I 30 kDa subunit family. In terms of assembly, NDH is composed of at least 16 different subunits, 5 of which are encoded in the nucleus.

The protein localises to the plastid. It is found in the chloroplast thylakoid membrane. The enzyme catalyses a plastoquinone + NADH + (n+1) H(+)(in) = a plastoquinol + NAD(+) + n H(+)(out). It carries out the reaction a plastoquinone + NADPH + (n+1) H(+)(in) = a plastoquinol + NADP(+) + n H(+)(out). Its function is as follows. NDH shuttles electrons from NAD(P)H:plastoquinone, via FMN and iron-sulfur (Fe-S) centers, to quinones in the photosynthetic chain and possibly in a chloroplast respiratory chain. The immediate electron acceptor for the enzyme in this species is believed to be plastoquinone. Couples the redox reaction to proton translocation, and thus conserves the redox energy in a proton gradient. The protein is NAD(P)H-quinone oxidoreductase subunit J, chloroplastic of Solanum bulbocastanum (Wild potato).